A 117-amino-acid polypeptide reads, in one-letter code: Large ribosomal subunit protein bL20c (117 aa).

Belongs to the bacterial ribosomal protein bL20 family.

Its subcellular location is the plastid. The protein localises to the chloroplast. Binds directly to 23S ribosomal RNA and is necessary for the in vitro assembly process of the 50S ribosomal subunit. It is not involved in the protein synthesizing functions of that subunit. In Populus trichocarpa (Western balsam poplar), this protein is Large ribosomal subunit protein bL20c.